A 329-amino-acid polypeptide reads, in one-letter code: MPILFDCNAIASQVLKDEASALLESVGQFQKPNDLEAIVKLILKSQENGGKLVIVGVGKSALVAQKIVASMLSTGNRSAFLHPTEAMHGDLGMVEKNDVVLMISYGGESLELLNLVSHLKRLSHKIITFTKSPNSSLSKLGDYYLSLKIQKEACPINTAPTTSTTLTLALGDVLMACLMRAKNFSQEDFASFHPGGLLGKKLFVKVKDLLQTTNLPLIAPSTSFKDALIEMSEKRLGSAILVNEANELVGVLSDGDVRRALLKGVSLKSEVRHFATLKPKSFKNLDALLLEALEFLERHKIQLLVCVDDHNKVLGVLHLHQLLELGLKA.

The region spanning 38–184 (IVKLILKSQE…MACLMRAKNF (147 aa)) is the SIS domain. Position 56 to 61 (56 to 61 (GVGKSA)) interacts with ATP. 2 CBS domains span residues 211–267 (QTTN…GVSL) and 270–329 (EVRH…GLKA).

This sequence belongs to the SIS family. GutQ/KpsF subfamily.

This is an uncharacterized protein from Helicobacter pylori (strain ATCC 700392 / 26695) (Campylobacter pylori).